Consider the following 163-residue polypeptide: NADH-quinone oxidoreductase subunit I (163 aa).

2 consecutive 4Fe-4S ferredoxin-type domains span residues 53–83 (LRRY…IEAG) and 94–123 (TLYE…ETRE). 8 residues coordinate [4Fe-4S] cluster: Cys63, Cys66, Cys69, Cys73, Cys103, Cys106, Cys109, and Cys113.

It belongs to the complex I 23 kDa subunit family. As to quaternary structure, NDH-1 is composed of 14 different subunits. Subunits NuoA, H, J, K, L, M, N constitute the membrane sector of the complex. Requires [4Fe-4S] cluster as cofactor.

It localises to the cell inner membrane. It carries out the reaction a quinone + NADH + 5 H(+)(in) = a quinol + NAD(+) + 4 H(+)(out). Functionally, NDH-1 shuttles electrons from NADH, via FMN and iron-sulfur (Fe-S) centers, to quinones in the respiratory chain. The immediate electron acceptor for the enzyme in this species is believed to be ubiquinone. Couples the redox reaction to proton translocation (for every two electrons transferred, four hydrogen ions are translocated across the cytoplasmic membrane), and thus conserves the redox energy in a proton gradient. In Alkalilimnicola ehrlichii (strain ATCC BAA-1101 / DSM 17681 / MLHE-1), this protein is NADH-quinone oxidoreductase subunit I.